The sequence spans 309 residues: Aspartate carbamoyltransferase catalytic subunit (309 aa).

Residues Arg57 and Thr58 each coordinate carbamoyl phosphate. L-aspartate is bound at residue Lys86. Arg107, His135, and Gln138 together coordinate carbamoyl phosphate. L-aspartate-binding residues include Arg168 and Arg228. Carbamoyl phosphate contacts are provided by Leu267 and Pro268.

It belongs to the aspartate/ornithine carbamoyltransferase superfamily. ATCase family. In terms of assembly, heterooligomer of catalytic and regulatory chains.

The enzyme catalyses carbamoyl phosphate + L-aspartate = N-carbamoyl-L-aspartate + phosphate + H(+). The protein operates within pyrimidine metabolism; UMP biosynthesis via de novo pathway; (S)-dihydroorotate from bicarbonate: step 2/3. Catalyzes the condensation of carbamoyl phosphate and aspartate to form carbamoyl aspartate and inorganic phosphate, the committed step in the de novo pyrimidine nucleotide biosynthesis pathway. The sequence is that of Aspartate carbamoyltransferase catalytic subunit from Nitrosopumilus maritimus (strain SCM1).